The primary structure comprises 157 residues: Crossover junction endodeoxyribonuclease RuvC (157 aa).

Catalysis depends on residues Asp-7, Glu-67, and Asp-140. The Mg(2+) site is built by Asp-7, Glu-67, and Asp-140.

The protein belongs to the RuvC family. In terms of assembly, homodimer which binds Holliday junction (HJ) DNA. The HJ becomes 2-fold symmetrical on binding to RuvC with unstacked arms; it has a different conformation from HJ DNA in complex with RuvA. In the full resolvosome a probable DNA-RuvA(4)-RuvB(12)-RuvC(2) complex forms which resolves the HJ. Mg(2+) is required as a cofactor.

It localises to the cytoplasm. The catalysed reaction is Endonucleolytic cleavage at a junction such as a reciprocal single-stranded crossover between two homologous DNA duplexes (Holliday junction).. Functionally, the RuvA-RuvB-RuvC complex processes Holliday junction (HJ) DNA during genetic recombination and DNA repair. Endonuclease that resolves HJ intermediates. Cleaves cruciform DNA by making single-stranded nicks across the HJ at symmetrical positions within the homologous arms, yielding a 5'-phosphate and a 3'-hydroxyl group; requires a central core of homology in the junction. The consensus cleavage sequence is 5'-(A/T)TT(C/G)-3'. Cleavage occurs on the 3'-side of the TT dinucleotide at the point of strand exchange. HJ branch migration catalyzed by RuvA-RuvB allows RuvC to scan DNA until it finds its consensus sequence, where it cleaves and resolves the cruciform DNA. This Rickettsia bellii (strain OSU 85-389) protein is Crossover junction endodeoxyribonuclease RuvC.